The chain runs to 212 residues: MAIGLVGRKCGMTRIFTDAGVSVPVTVIEVDPNRITQIKTLETDGYQAVQVTTGERRESRVTNAQKGHFAKAGVAAGRLVKEFRVTEAELEGREIGGTIGVDLFTVGQVVDVTGQSKGKGFQGGVKRWNFRTQDATHGNSVSHRVLGSTGQNQTPGRVFKGKKMAGHLGDERVTVQGLEIVSIDAERSVLVVKGAIPGATGGDVIVRPTIKA.

Glutamine 153 carries the N5-methylglutamine modification.

This sequence belongs to the universal ribosomal protein uL3 family. As to quaternary structure, part of the 50S ribosomal subunit. Forms a cluster with proteins L14 and L19. In terms of processing, methylated by PrmB.

Its function is as follows. One of the primary rRNA binding proteins, it binds directly near the 3'-end of the 23S rRNA, where it nucleates assembly of the 50S subunit. The sequence is that of Large ribosomal subunit protein uL3 from Acinetobacter baylyi (strain ATCC 33305 / BD413 / ADP1).